The primary structure comprises 474 residues: Calcitonin receptor (474 aa).

The first 24 residues, 1–24 (MRFTFTSRCLALFLLLNHPTPILP), serve as a signal peptide directing secretion. Residues 25-146 (AFSNQTYPTI…FTPEKLKNAY (122 aa)) are Extracellular-facing. N28, N73, N125, and N130 each carry an N-linked (GlcNAc...) asparagine glycan. 3 disulfides stabilise this stretch: C55–C81, C72–C112, and C95–C134. A helical membrane pass occupies residues 147-169 (VLYYLAIVGHSLSIFTLVISLGI). The Cytoplasmic segment spans residues 170-181 (FVFFRSLGCQRV). A helical transmembrane segment spans residues 182-202 (TLHKNMFLTYILNSMIIIIHL). Over 203–219 (VEVVPNGELVRRDPVSC) the chain is Extracellular. C219 and C289 are oxidised to a cystine. The helical transmembrane segment at 220–242 (KILHFFHQYMMACNYFWMLCEGI) threads the bilayer. At 243 to 259 (YLHTLIVVAVFTEKQRL) the chain is on the cytoplasmic side. A helical membrane pass occupies residues 260-280 (RWYYLLGWGFPLVPTTIHAIT). Residues 281-296 (RAVYFNDNCWLSVETH) lie on the Extracellular side of the membrane. The helical transmembrane segment at 297–320 (LLYIIHGPVMAALVVNFFFLLNIV) threads the bilayer. The Cytoplasmic portion of the chain corresponds to 321-340 (RVLVTKMRETHEAESHMYLK). Residues 341–359 (AVKATMILVPLLGIQFVVF) traverse the membrane as a helical segment. Topologically, residues 360–367 (PWRPSNKM) are extracellular. Residues 368–394 (LGKIYDYVMHSLIHFQGFFVATIYCFC) traverse the membrane as a helical segment. The Cytoplasmic segment spans residues 395–474 (NNEVQTTVKR…LNIIEQESSA (80 aa)).

It belongs to the G-protein coupled receptor 2 family. In terms of assembly, heterodimer of CALCR and RAMP1, RAMP2 or RAMP3; the receptor complexes function as AMYR1, AMYR2 and AMYR3 receptors, respectively, and respond to amylin/IAPP, calcitonin/CT and CGRP1 ligands. Interacts with GPRASP2.

The protein resides in the cell membrane. Its activity is regulated as follows. Sensitive to cholera toxin. G protein-coupled receptor activated by ligand peptides amylin (IAPP), calcitonin (CT/CALCA) and calcitonin gene-related peptide type 1 (CGRP1/CALCA). CALCR interacts with receptor-activity-modifying proteins RAMP1, 2 and 3 to form receptor complexes AMYR1, 2 and 3, respectively. IAPP, CT and CGRP1 activate CALCR and AMYRs with distinct modes of receptor activation resulting in specific phenotypes. Ligand binding causes a conformation change that triggers signaling via guanine nucleotide-binding proteins (G proteins) and modulates the activity of downstream effectors. Activates cAMP-dependent pathway. Its function is as follows. Non-functional protein. Unable to couple to G proteins and activate adenylyl cyclase. Does not undergo receptor internalization following ligand binding. This is Calcitonin receptor from Homo sapiens (Human).